The sequence spans 648 residues: MYKKVVGGWFVYLVSTQISSGRAGSARFGGHLGYPSPSVAYIMARASRKANGSKAKSNSVQEYLDLISLQKQQFDQMRANYSHQNTQLAKSNSMLMIKITDLETKISELVQENVQLRSRLSVTELRFKERLNQSFNLLEHGAFQRFDEIVNLFAVVRAQQGLRPESAAATEQAQRRFKGLEQRGVSPKVVGFDVPSSDSVRGERETLDDRAQQHQEADSMELNVEETQPLRKKRRRSSRRESLFIPSDFDFSNDSLENALKEADKSRSAKDEAPSVAEDTITEEKHRESASRTTEQGESESRTKEASGTLTQSNEDGMGNDKSLQKEGTQQEDAANFTHSIIEYFIPEEYDVGSSDVANTSKSKLEVYRDDNEIESSQSTSSGECKELTGELSSAQPPFVQIPASSQSKIKHSLKPPRTSQRKIVVDEVMPHNDYSDATRPRRTRGKAVDYKWPSLRAKMRRPTDKLVDATTVTDIHELQVPTNRKLRKQREGVADSADVHGETDHEQDPEQSPAAEDVSVGLQSINSNIQKDEVSDQPLQATEVTQALPEDLPLRQPMALKDITNKIHIVQKPKKSLAKKPIIGDVSDENSYYGDDTSASGLRLNEGDLSVFDLIGGVKCSNIPKTHRARAKAERQVGKKPAFKVST.

2 coiled-coil regions span residues 95–122 and 208–273; these read LMIKITDLETKISELVQENVQLRSRLSV and DDRA…KDEA. Disordered stretches follow at residues 188-239, 262-334, 367-443, 483-518, and 628-648; these read KVVG…RSSR, EADK…QEDA, VYRD…RPRR, TNRKLRKQREGVADSADVHGETDHEQDPEQSPAAED, and HRARAKAERQVGKKPAFKVST. Basic and acidic residues-rich tracts occupy residues 200–217 and 262–273; these read VRGERETLDDRAQQHQEA and EADKSRSAKDEA. The segment covering 306–315 has biased composition (polar residues); sequence ASGTLTQSNE. 2 stretches are compositionally biased toward basic and acidic residues: residues 424–440 and 490–509; these read IVVDEVMPHNDYSDATR and QREGVADSADVHGETDHEQD.

The protein belongs to the shugoshin family.

The protein localises to the nucleus. It is found in the chromosome. Its subcellular location is the centromere. Its function is as follows. Plays a central role in chromosome cohesion during cell division by preventing premature dissociation of cohesin complex from centromeres after prophase, when most of cohesin complex dissociates from chromosomes arms. May act by protecting RAD21 and or REC8 from cleavage by ESP1/separase. This is Shugoshin (SGO1) from Eremothecium gossypii (strain ATCC 10895 / CBS 109.51 / FGSC 9923 / NRRL Y-1056) (Yeast).